We begin with the raw amino-acid sequence, 452 residues long: UDP-N-acetylmuramoylalanine--D-glutamate ligase (452 aa).

119–125 (GSNGKTT) is an ATP binding site.

Belongs to the MurCDEF family.

Its subcellular location is the cytoplasm. It carries out the reaction UDP-N-acetyl-alpha-D-muramoyl-L-alanine + D-glutamate + ATP = UDP-N-acetyl-alpha-D-muramoyl-L-alanyl-D-glutamate + ADP + phosphate + H(+). The protein operates within cell wall biogenesis; peptidoglycan biosynthesis. Functionally, cell wall formation. Catalyzes the addition of glutamate to the nucleotide precursor UDP-N-acetylmuramoyl-L-alanine (UMA). The protein is UDP-N-acetylmuramoylalanine--D-glutamate ligase of Streptococcus pyogenes serotype M12 (strain MGAS9429).